A 191-amino-acid chain; its full sequence is MLLLASASPARRRLLEQACIPHRVQVSGVDEDGIHHSEPPQLVCLLAEAKAKAVHGQLTDPSIHAVLGCDSVLAFEGEVFGKPADAEEAKARWRRMRGHWGDLHTGHCLIATSSTTAISSQCQCITTRVLFADLSDAEIDAYVSSGEPLQCAGGFALEGRGGCVVERLNGCYSNVIGLSLPLLRQWLPQDF.

Asp70 acts as the Proton acceptor in catalysis.

This sequence belongs to the Maf family. A divalent metal cation is required as a cofactor.

The protein localises to the cytoplasm. It catalyses the reaction a ribonucleoside 5'-triphosphate + H2O = a ribonucleoside 5'-phosphate + diphosphate + H(+). The catalysed reaction is a 2'-deoxyribonucleoside 5'-triphosphate + H2O = a 2'-deoxyribonucleoside 5'-phosphate + diphosphate + H(+). Functionally, nucleoside triphosphate pyrophosphatase. May have a dual role in cell division arrest and in preventing the incorporation of modified nucleotides into cellular nucleic acids. This is Nucleoside triphosphate pyrophosphatase from Synechococcus sp. (strain WH7803).